The following is a 495-amino-acid chain: Glucose-6-phosphate 1-dehydrogenase (495 aa).

NADP(+)-binding positions include 11-18 (GASGDLAK), R45, 84-85 (DV), and K147. Substrate contacts are provided by H177, K181, E215, and D234. H239 acts as the Proton acceptor in catalysis. Substrate is bound by residues K339 and K344.

This sequence belongs to the glucose-6-phosphate dehydrogenase family.

The catalysed reaction is D-glucose 6-phosphate + NADP(+) = 6-phospho-D-glucono-1,5-lactone + NADPH + H(+). It functions in the pathway carbohydrate degradation; pentose phosphate pathway; D-ribulose 5-phosphate from D-glucose 6-phosphate (oxidative stage): step 1/3. Catalyzes the oxidation of glucose 6-phosphate to 6-phosphogluconolactone. The sequence is that of Glucose-6-phosphate 1-dehydrogenase from Streptococcus pneumoniae serotype 4 (strain ATCC BAA-334 / TIGR4).